The primary structure comprises 571 residues: MRTSQYLLSTLKETPSDAVVISHQLMLRAGMIRKLASGLYTWLPLGLRALRKAEAIVREEMDKAGALEVLMPAIQPAELWQESGRWEQYGPELLRIRDRHAREFCVGPTHEEVITDLARNELNSYKQLPINFYQIQTKFRDEIRPRFGLMRGREFLMKDAYSFHLTQESLQETYDRMHQAYCNIFSRLGLEFRPVQADTGSIGGTGSHEFHVLAASGEDDIAFSDSSDYAANIEKAEAIPREKARAAASEELRLVDTPDARTIDELVRQFGLPVEKTIKTLVVQGAEEGRLVALIVRGDHELNEIKAANLEQVASPLAFASEAEIRAAIGAGPGSLGPLNLPIPAIVDRSVTLLSDFAAGANLDGKHYFGLNWERDLPLPQVADLRNVVEGDPSPDGQGSLVIKRGIEVGHIFQLGTKYSEAMNCKVLGENGKPVTLIMGCYGIGVSRVVAAAIEQNYDERGILWPQALAPFQIALVPMKYESAAVREATDRLYAELVAAGYEVLLDDRDKKTSPGVKFADMELIGIPHRIVVSERGLAEGTLEYKGRRETEVQAIPAADLITFLGNRIGR.

Belongs to the class-II aminoacyl-tRNA synthetase family. ProS type 1 subfamily. Homodimer.

It is found in the cytoplasm. The catalysed reaction is tRNA(Pro) + L-proline + ATP = L-prolyl-tRNA(Pro) + AMP + diphosphate. Its function is as follows. Catalyzes the attachment of proline to tRNA(Pro) in a two-step reaction: proline is first activated by ATP to form Pro-AMP and then transferred to the acceptor end of tRNA(Pro). As ProRS can inadvertently accommodate and process non-cognate amino acids such as alanine and cysteine, to avoid such errors it has two additional distinct editing activities against alanine. One activity is designated as 'pretransfer' editing and involves the tRNA(Pro)-independent hydrolysis of activated Ala-AMP. The other activity is designated 'posttransfer' editing and involves deacylation of mischarged Ala-tRNA(Pro). The misacylated Cys-tRNA(Pro) is not edited by ProRS. The sequence is that of Proline--tRNA ligase from Azotobacter vinelandii (strain DJ / ATCC BAA-1303).